The primary structure comprises 146 residues: MSEQLVVVNAENQILGRMATHIAKLLIQGKRVVVVNAEKAIISGPRARVVRGYSLIFSVRKFQNPEKNTIKRPRTPINIVKRTVRGMLPKNKSGKMMFKNLIVFIGIPAEYKDKQMIRFEDADVKRLKGKYITVGELSKLLGGFSQ.

This sequence belongs to the universal ribosomal protein uL13 family. In terms of assembly, part of the 50S ribosomal subunit.

Functionally, this protein is one of the early assembly proteins of the 50S ribosomal subunit, although it is not seen to bind rRNA by itself. It is important during the early stages of 50S assembly. In Sulfurisphaera tokodaii (strain DSM 16993 / JCM 10545 / NBRC 100140 / 7) (Sulfolobus tokodaii), this protein is Large ribosomal subunit protein uL13.